The chain runs to 373 residues: MSDLTLVLLGAGNSSRFGLDVKKQWLWCGNEPLWLYVTNRFTDMFPFHDVVITAHPKEIPFYKKFCHHTIVKGADTRQQSLLNALEMVKTPYVLVSDIARPCIQKEVVQKIIDNRSKAACIVPYIQPADTVVYKNETIDRNEVKLIQTPQLSSTDILRKALTQGKEFTDESSAIQALGEKVFYILGNRKQHKLTYKEDMKLLNCLQKPSATKRIGNGLDVHAFCEDRKLYLCGIEIPYDKGLAGHSDADVAIHALIDALLGAAGFGDIGELFPDSDETYKDIDSKKLLCETVRLLRACGFVIEHVDLTIVAQNPKIGPFKEKMKESLHDLLQIPYHLINLKATTTEHLGFVGRNEGIAAMATATLHYFDWSEI.

The tract at residues 1–213 (MSDLTLVLLG…CLQKPSATKR (213 aa)) is 2-C-methyl-D-erythritol 4-phosphate cytidylyltransferase. The interval 213 to 373 (RIGNGLDVHA…TLHYFDWSEI (161 aa)) is 2-C-methyl-D-erythritol 2,4-cyclodiphosphate synthase. Residues Asp-219 and His-221 each contribute to the a divalent metal cation site. Residues 219–221 (DVH) and 245–246 (HS) each bind 4-CDP-2-C-methyl-D-erythritol 2-phosphate. His-253 contacts a divalent metal cation. Residues 267 to 269 (DIG), 272 to 276 (FPDSD), 343 to 346 (TTTE), Phe-350, and Arg-353 contribute to the 4-CDP-2-C-methyl-D-erythritol 2-phosphate site.

It in the N-terminal section; belongs to the IspD/TarI cytidylyltransferase family. IspD subfamily. In the C-terminal section; belongs to the IspF family. Requires a divalent metal cation as cofactor.

The enzyme catalyses 2-C-methyl-D-erythritol 4-phosphate + CTP + H(+) = 4-CDP-2-C-methyl-D-erythritol + diphosphate. The catalysed reaction is 4-CDP-2-C-methyl-D-erythritol 2-phosphate = 2-C-methyl-D-erythritol 2,4-cyclic diphosphate + CMP. It functions in the pathway isoprenoid biosynthesis; isopentenyl diphosphate biosynthesis via DXP pathway; isopentenyl diphosphate from 1-deoxy-D-xylulose 5-phosphate: step 2/6. The protein operates within isoprenoid biosynthesis; isopentenyl diphosphate biosynthesis via DXP pathway; isopentenyl diphosphate from 1-deoxy-D-xylulose 5-phosphate: step 4/6. Its function is as follows. Bifunctional enzyme that catalyzes the formation of 4-diphosphocytidyl-2-C-methyl-D-erythritol from CTP and 2-C-methyl-D-erythritol 4-phosphate (MEP) (IspD), and catalyzes the conversion of 4-diphosphocytidyl-2-C-methyl-D-erythritol 2-phosphate (CDP-ME2P) to 2-C-methyl-D-erythritol 2,4-cyclodiphosphate (ME-CPP) with a corresponding release of cytidine 5-monophosphate (CMP) (IspF). In Nitratiruptor sp. (strain SB155-2), this protein is Bifunctional enzyme IspD/IspF.